Consider the following 581-residue polypeptide: Arginine--tRNA ligase (581 aa).

Residues 131 to 141 carry the 'HIGH' region motif; it reads ANPTGPLHVGH.

Belongs to the class-I aminoacyl-tRNA synthetase family. As to quaternary structure, monomer.

It is found in the cytoplasm. The enzyme catalyses tRNA(Arg) + L-arginine + ATP = L-arginyl-tRNA(Arg) + AMP + diphosphate. The polypeptide is Arginine--tRNA ligase (Nitrosospira multiformis (strain ATCC 25196 / NCIMB 11849 / C 71)).